The sequence spans 396 residues: MAETQVRNFNINFGPQHPAAHGVLRLVLELDGEVVERVDPHIGLLHRGTEKLMEAKTYLQAVPYLDRLDYVAPMNQEHAYALAVERLLDIEVPKRGQLIRVLYSEIGRILNHLLNVTTQAMDVGALTPPLWGFEEREKLMVFYERACGARMHAAYFRPGGVHQDLPDQLIEDIGKWIDPFFTTLKNLDDLITPNRIFKQRNVDIGVVKLEDAWAWGFSGVMVRGSGAAWDLRKSQPYECYSEMEFDIPVGKNGDCYDRYLIRMEEMRQSVRIMRQCVDLLLGKERVGPVSNTDHKIVPPKRGEMKRSMEALIHHFKLYTEGYHVPAGEVYAAVEAPKGEFGVYLVSDGSNKPYRCKLRAPGFAHLQAMDFLCRGHMLADVSAILGSLDIVFGEVDR.

The protein belongs to the complex I 49 kDa subunit family. As to quaternary structure, NDH-1 is composed of 14 different subunits. Subunits NuoB, C, D, E, F, and G constitute the peripheral sector of the complex.

The protein resides in the cell inner membrane. It carries out the reaction a quinone + NADH + 5 H(+)(in) = a quinol + NAD(+) + 4 H(+)(out). In terms of biological role, NDH-1 shuttles electrons from NADH, via FMN and iron-sulfur (Fe-S) centers, to quinones in the respiratory chain. The immediate electron acceptor for the enzyme in this species is believed to be ubiquinone. Couples the redox reaction to proton translocation (for every two electrons transferred, four hydrogen ions are translocated across the cytoplasmic membrane), and thus conserves the redox energy in a proton gradient. This chain is NADH-quinone oxidoreductase subunit D, found in Brucella melitensis biotype 1 (strain ATCC 23456 / CCUG 17765 / NCTC 10094 / 16M).